A 126-amino-acid chain; its full sequence is UPF0102 protein gll3754 (126 aa).

It belongs to the UPF0102 family.

In Gloeobacter violaceus (strain ATCC 29082 / PCC 7421), this protein is UPF0102 protein gll3754.